The primary structure comprises 396 residues: Elongation factor Tu (396 aa).

The 196-residue stretch at 10-205 (KPHVNIGTIG…ACDDNIPDPV (196 aa)) folds into the tr-type G domain. The interval 19 to 26 (GHVDHGKT) is G1. Position 19-26 (19-26 (GHVDHGKT)) interacts with GTP. T26 is a binding site for Mg(2+). The tract at residues 62–66 (GITIN) is G2. Positions 83–86 (DAPG) are G3. Residues 83–87 (DAPGH) and 138–141 (NKCD) each bind GTP. Residues 138 to 141 (NKCD) are G4. Residues 175–177 (SAL) are G5.

Belongs to the TRAFAC class translation factor GTPase superfamily. Classic translation factor GTPase family. EF-Tu/EF-1A subfamily. As to quaternary structure, monomer.

It is found in the cytoplasm. It carries out the reaction GTP + H2O = GDP + phosphate + H(+). Its function is as follows. GTP hydrolase that promotes the GTP-dependent binding of aminoacyl-tRNA to the A-site of ribosomes during protein biosynthesis. The polypeptide is Elongation factor Tu (Corynebacterium glutamicum (strain R)).